Here is a 443-residue protein sequence, read N- to C-terminus: Mitochondrial distribution and morphology protein 10 (443 aa).

Belongs to the MDM10 family. In terms of assembly, component of the ER-mitochondria encounter structure (ERMES) or MDM complex, composed of MMM1, MDM10, MDM12 and MDM34. Associates with the mitochondrial outer membrane sorting assembly machinery SAM(core) complex.

The protein resides in the mitochondrion outer membrane. Its function is as follows. Component of the ERMES/MDM complex, which serves as a molecular tether to connect the endoplasmic reticulum and mitochondria. Components of this complex are involved in the control of mitochondrial shape and protein biogenesis and may function in phospholipid exchange. MDM10 is involved in the late assembly steps of the general translocase of the mitochondrial outer membrane (TOM complex). Functions in the TOM40-specific route of the assembly of outer membrane beta-barrel proteins, including the association of TOM40 with the receptor TOM22 and small TOM proteins. Can associate with the SAM(core) complex as well as the MDM12-MMM1 complex, both involved in late steps of the major beta-barrel assembly pathway, that is responsible for biogenesis of all outer membrane beta-barrel proteins. May act as a switch that shuttles between both complexes and channels precursor proteins into the TOM40-specific pathway. Plays a role in mitochondrial morphology and in the inheritance of mitochondria. The protein is Mitochondrial distribution and morphology protein 10 of Pyricularia oryzae (strain 70-15 / ATCC MYA-4617 / FGSC 8958) (Rice blast fungus).